Consider the following 605-residue polypeptide: Isocitrate dehydrogenase kinase/phosphatase (605 aa).

ATP-binding positions include 353–359 (APGFKGT) and K374. D413 is an active-site residue.

Belongs to the AceK family.

The protein localises to the cytoplasm. The catalysed reaction is L-seryl-[isocitrate dehydrogenase] + ATP = O-phospho-L-seryl-[isocitrate dehydrogenase] + ADP + H(+). Bifunctional enzyme which can phosphorylate or dephosphorylate isocitrate dehydrogenase (IDH) on a specific serine residue. This is a regulatory mechanism which enables bacteria to bypass the Krebs cycle via the glyoxylate shunt in response to the source of carbon. When bacteria are grown on glucose, IDH is fully active and unphosphorylated, but when grown on acetate or ethanol, the activity of IDH declines drastically concomitant with its phosphorylation. This chain is Isocitrate dehydrogenase kinase/phosphatase, found in Rhodopseudomonas palustris (strain HaA2).